A 192-amino-acid chain; its full sequence is MANAAQKKLAAQNKHILTFMLAADLIVNVLFWILRFFVRSGLSKFSKFVYAFASISSGFLHYQLHRAAAPKYDARGSLLYVGQDLLQEGVTSYMVDYMYFSWILIFLAALTSVKVFAFYLLVPIFVVYKAAPLLKMLLQQLKNFKNQALNQPPQQQQQQQQQQHQQHATPSEPVLSKRQQKLRKKAAKYSRP.

The next 2 membrane-spanning stretches (helical) occupy residues 16 to 36 (ILTFMLAADLIVNVLFWILRF) and 102 to 122 (WILIFLAALTSVKVFAFYLLV). The interval 149 to 192 (LNQPPQQQQQQQQQQHQQHATPSEPVLSKRQQKLRKKAAKYSRP) is disordered. A compositionally biased stretch (low complexity) spans 151–167 (QPPQQQQQQQQQQHQQH). The span at 178–192 (RQQKLRKKAAKYSRP) shows a compositional bias: basic residues.

The protein belongs to the TMEM208 family.

The protein resides in the endoplasmic reticulum membrane. Its function is as follows. May function in a SRP (signal recognition particle) and GET (guided entry of tail-anchored proteins) independent pathway for targeting a broad range of substrate proteins to the endoplasmic reticulum. Has a role in meiosis. The sequence is that of SRP-independent targeting protein 2 homolog from Schizosaccharomyces pombe (strain 972 / ATCC 24843) (Fission yeast).